Consider the following 314-residue polypeptide: tRNA dimethylallyltransferase (314 aa).

Residue 13–20 (GPTAVGKT) coordinates ATP. 15–20 (TAVGKT) is a substrate binding site. An interaction with substrate tRNA region spans residues 38-41 (DSMQ).

It belongs to the IPP transferase family. Monomer. It depends on Mg(2+) as a cofactor.

The enzyme catalyses adenosine(37) in tRNA + dimethylallyl diphosphate = N(6)-dimethylallyladenosine(37) in tRNA + diphosphate. Its function is as follows. Catalyzes the transfer of a dimethylallyl group onto the adenine at position 37 in tRNAs that read codons beginning with uridine, leading to the formation of N6-(dimethylallyl)adenosine (i(6)A). The chain is tRNA dimethylallyltransferase from Bacillus subtilis (strain 168).